The chain runs to 933 residues: Serine/threonine-protein kinase PknD (933 aa).

A Protein kinase domain is found at 4–291 (YDIIRMIGKG…ALKADIEQHL (288 aa)). Residues 10–18 (IGKGGMGEV) and Lys-33 contribute to the ATP site. Asp-138 acts as the Proton acceptor in catalysis.

The protein belongs to the protein kinase superfamily. Ser/Thr protein kinase family. Post-translationally, autophosphorylated on serine and threonine residues.

The catalysed reaction is L-seryl-[protein] + ATP = O-phospho-L-seryl-[protein] + ADP + H(+). It carries out the reaction L-threonyl-[protein] + ATP = O-phospho-L-threonyl-[protein] + ADP + H(+). Functionally, together with the serine/threonine kinase Pkn1, may play a role in the specific interactions with host proteins during intracellular growth. The protein is Serine/threonine-protein kinase PknD of Chlamydia abortus (strain DSM 27085 / S26/3) (Chlamydophila abortus).